Consider the following 451-residue polypeptide: MKTAMTAESTLYDAQTIRERVRAAGVVGAGGAGFPAHVKLQAQVDTFLVNAAECEPMLKVDQQLMAVQAERLIRGVQYAMTATGARAGIIALKEKYQRAINALTPLLPAGIRLHILPDVYPAGDEVLTIWMATGRRVPPAALPVSVGVVVNNVQTVLNITRAVEQQYPVTRRTLTVNGAVARPITLTVPIGMSLREVLALAGGATVDDPGFINGGPMMGGLITSLDTPVSKTTGGLLVLPKSHALIQRRMQDERTVLSVAKTVCEQCRLCTDLCPRHLIGHELSPHLLVRAVNYQQAATPQLLLTALTCSECNVCESVACPVGISPMRINRMLKRELRALNHRYEGPLNPEDEMAKYRLIPVKRLITKLGLSDWYHDAPLTETDYPTDKTTLLLRQHIGASAIPCVLQGEHVVRGQCVADVPSGALGAPVHASIDGIVSEITEQSITVIRG.

4Fe-4S ferredoxin-type domains lie at 255-284 (TVLS…HELS) and 300-330 (PQLL…MRIN). Cys-264, Cys-267, Cys-270, Cys-274, Cys-309, Cys-312, Cys-315, and Cys-320 together coordinate [4Fe-4S] cluster.

The protein belongs to the PduS cobalamin reductase family. In terms of assembly, monomer, forms a complex with PduO. Interacts with PduT, probably via the N-terminus of PduS. [4Fe-4S] cluster serves as cofactor. FMN is required as a cofactor.

It localises to the bacterial microcompartment. It participates in polyol metabolism; 1,2-propanediol degradation. In terms of biological role, a bifunctional cobalamin reductase that converts cob(III)alamin to cob(II)alamin and then to cob(I)alamin in the bacterial microcompartment (BMC) dedicated to 1,2-propanediol (1,2-PD) degradation. PduS and PduO allow regeneration of the adenosylcobalamin cofactor within the BMC. Cobalamin reduction probably occurs spontaneously in the presence of free reduced flavin nucleotides, this protein may be involved in electron transfer for this reduction. Its function is as follows. Expression of a cosmid containing the full 21-gene pdu operon in E.coli allows E.coli to grow on 1,2-propanediol (1,2-PD) with the appearance of BMCs in its cytoplasm. The 1,2-PD-specific bacterial microcompartment (BMC) concentrates low levels of 1,2-PD catabolic enzymes, concentrates volatile reaction intermediates thus enhancing pathway flux and keeps the level of toxic, mutagenic propionaldehyde low. The sequence is that of Cobalamin reductase PduS from Citrobacter freundii.